The sequence spans 614 residues: Acetylcholinesterase (614 aa).

A signal peptide spans 1-31; the sequence is MRPPWYPLHTPSLAFPLLFLLLSLLGGGARA. Cysteines 100 and 127 form a disulfide. The Acyl-ester intermediate role is filled by Ser234. Cys288 and Cys303 are joined by a disulfide. N-linked (GlcNAc...) asparagine glycosylation is present at Asn296. Glu365 serves as the catalytic Charge relay system. N-linked (GlcNAc...) asparagine glycosylation is present at Asn381. A disulfide bridge connects residues Cys440 and Cys560. Residue His478 is the Charge relay system of the active site. A glycan (N-linked (GlcNAc...) asparagine) is linked at Asn495.

This sequence belongs to the type-B carboxylesterase/lipase family. In terms of assembly, isoform H generates GPI-anchored dimers; disulfide linked. Isoform T generates multiple structures, ranging from monomers and dimers to collagen-tailed and hydrophobic-tailed forms, in which catalytic tetramers are associated with anchoring proteins that attach them to the basal lamina or to cell membranes. In the collagen-tailed forms, isoform T subunits are associated with a specific collagen, COLQ, which triggers the formation of isoform T tetramers, from monomers and dimers. Interacts with PRIMA1. The interaction with PRIMA1 is required to anchor it to the basal lamina of cells and organize into tetramers. As to expression, predominates in most expressing tissues except erythrocytes where a glycophospholipid-attached form of ACHE predominates.

The protein localises to the synapse. Its subcellular location is the secreted. It is found in the cell membrane. The enzyme catalyses acetylcholine + H2O = choline + acetate + H(+). Its function is as follows. Terminates signal transduction at the neuromuscular junction by rapid hydrolysis of the acetylcholine released into the synaptic cleft. The chain is Acetylcholinesterase (Ache) from Mus musculus (Mouse).